The chain runs to 959 residues: General vesicular transport factor p115 (959 aa).

The interval 1 to 637 (MNFLRGVMGG…IYKSSEEDKK (637 aa)) is globular head. ARM repeat units lie at residues 20 to 60 (AETI…VGIQ), 61 to 121 (AMEH…IKQP), 123 to 163 (NVTL…IILV), 166 to 207 (MGVS…VAFE), 208 to 253 (NAFE…FKEG), 255 to 310 (YIQR…MFQC), 311 to 354 (GLLQ…FASV), 363 to 408 (PAIV…ATLL), 420 to 459 (SAGQ…EQLL), 473 to 513 (SLLQ…THFL), 518 to 571 (NVPF…IEKR), and 573 to 630 (GKEN…AIYK). Residue S50 is modified to Phosphoserine. At K202 the chain carries N6-acetyllysine. The stretch at 638-930 (EEEVKKTLEQ…LSLKSKLKDL (293 aa)) forms a coiled coil. The segment at 925-959 (SKLKDLGHPVEEEDESGDQEDDDDELDDGDRDQDI) is disordered. A compositionally biased stretch (acidic residues) spans 935–959 (EEEDESGDQEDDDDELDDGDRDQDI). At S940 the chain carries Phosphoserine.

This sequence belongs to the VDP/USO1/EDE1 family. As to quaternary structure, homodimer. Dimerizes by parallel association of the tails, resulting in an elongated structure with two globular head domains side by side, and a long rod-like tail structure. Interacts with MIF. Interacts with GM130/GOLGA2; interaction is disrupted upon phosphorylation of GM130/GOLGA2 by CDK1 at the onset of mitosis. In terms of processing, phosphorylated in a cell cycle-specific manner; phosphorylated in interphase but not in mitotic cells. Dephosphorylated protein associates with the Golgi membrane; phosphorylation promostes dissociation.

It localises to the cytoplasm. Its subcellular location is the cytosol. The protein localises to the golgi apparatus membrane. In terms of biological role, general vesicular transport factor required for intercisternal transport in the Golgi stack; it is required for transcytotic fusion and/or subsequent binding of the vesicles to the target membrane. May well act as a vesicular anchor by interacting with the target membrane and holding the vesicular and target membranes in proximity. In Rattus norvegicus (Rat), this protein is General vesicular transport factor p115 (Uso1).